We begin with the raw amino-acid sequence, 276 residues long: Insulin-induced gene 1 protein (276 aa).

2 disordered regions span residues 1-26 (MPRLDDHLWRGPCAKGTKHRSHPRAS) and 49-73 (AAHGALGTDPAHGPQSAGVGGQGSS). Residues 1-83 (MPRLDDHLWR…SHVNSWHHHL (83 aa)) lie on the Cytoplasmic side of the membrane. The segment covering 16–25 (GTKHRSHPRA) has biased composition (basic residues). The chain crosses the membrane as a helical span at residues 84–106 (VQRSLVLFSVGVVLALVLNLLQV). Over 107–125 (QRNVTLFPDEVIATIFSSA) the chain is Extracellular. A helical membrane pass occupies residues 126-143 (WWVPPCCGTAAAVVGLLY). Topologically, residues 144–158 (PCIDSHLGEPHKFKR) are cytoplasmic. Glycyl lysine isopeptide (Lys-Gly) (interchain with G-Cter in ubiquitin) cross-links involve residues Lys-155 and Lys-157. The helical transmembrane segment at 159 to 181 (EWASVMRCVAVFVGINHASAKLD) threads the bilayer. The Extracellular segment spans residues 182–184 (FAN). Residues 185-203 (NVQLSLTLAALSLGLWWTF) traverse the membrane as a helical segment. Over 204 to 208 (DRSRS) the chain is Cytoplasmic. The residue at position 206 (Ser-206) is a Phosphoserine. A helical membrane pass occupies residues 209-230 (GLGLGITIAFLATLITQLLVYN). The Extracellular portion of the chain corresponds to 231-244 (GVYQYTSPDFLYIR). The helical transmembrane segment at 245–262 (SWLPCIFFSGGVTVGNIG) threads the bilayer. At 263 to 276 (RQLAMGVPEKPHSD) the chain is on the cytoplasmic side. The KxHxx motif lies at 270–276 (PEKPHSD).

This sequence belongs to the INSIG family. Interacts with SCAP; interaction is direct and only takes place in the presence of sterols; it prevents interaction between SCAP and the coat protein complex II (COPII). Associates with the SCAP-SREBP complex (composed of SCAP and SREBF1/SREBP1 or SREBF2/SREBP2); association is mediated via its interaction with SCAP and only takes place in the presence of sterols. Interaction with SCAP is mutually exclusive with PAQR3. Interacts with HMGCR (via its SSD); the interaction, accelerated by sterols, leads to the recruitment of HMGCR to AMFR/gp78 for its ubiquitination by the sterol-mediated ERAD pathway. Interacts with AMFR/gp78 (via its membrane domain); the interaction recruits HMCR at the ER membrane for its ubiquitination and degradation by the sterol-mediated ERAD pathway. Interacts with SOAT2/ACAT2; leading to promote recruitment of AMFR/gp78 and subsequent ubiquitination of SOAT2/ACAT2. Interacts with RNF139. Interacts with RNF145. Post-translationally, phosphorylation at Ser-206 by PCK1 reduces binding to oxysterol, disrupting the interaction between INSIG1 and SCAP, thereby promoting nuclear translocation of SREBP proteins (SREBF1/SREBP1 or SREBF2/SREBP2) and subsequent transcription of downstream lipogenesis-related genes. Ubiquitinated by AMFR/gp78 in response to sterol deprivation, leading to its degradation: when the SCAP-SREBP complex becomes dissociated from INSIG1, INSIG1 is then ubiquitinated and degraded in proteasomes. Although ubiquitination is required for rapid INSIG1 degradation, it is not required for release of the SCAP-SREBP complex. Ubiquitinated by RNF139.

The protein localises to the endoplasmic reticulum membrane. Oxysterol-binding protein that mediates feedback control of cholesterol synthesis by controlling both endoplasmic reticulum to Golgi transport of SCAP and degradation of HMGCR. Acts as a negative regulator of cholesterol biosynthesis by mediating the retention of the SCAP-SREBP complex in the endoplasmic reticulum, thereby blocking the processing of sterol regulatory element-binding proteins (SREBPs) SREBF1/SREBP1 and SREBF2/SREBP2. Binds oxysterol, including 25-hydroxycholesterol, regulating interaction with SCAP and retention of the SCAP-SREBP complex in the endoplasmic reticulum. In presence of oxysterol, interacts with SCAP, retaining the SCAP-SREBP complex in the endoplasmic reticulum, thereby preventing SCAP from escorting SREBF1/SREBP1 and SREBF2/SREBP2 to the Golgi. Sterol deprivation or phosphorylation by PCK1 reduce oxysterol-binding, disrupting the interaction between INSIG1 and SCAP, thereby promoting Golgi transport of the SCAP-SREBP complex, followed by processing and nuclear translocation of SREBF1/SREBP1 and SREBF2/SREBP2. Also regulates cholesterol synthesis by regulating degradation of HMGCR: initiates the sterol-mediated ubiquitin-mediated endoplasmic reticulum-associated degradation (ERAD) of HMGCR via recruitment of the reductase to the ubiquitin ligases AMFR/gp78 and/or RNF139. Also regulates degradation of SOAT2/ACAT2 when the lipid levels are low: initiates the ubiquitin-mediated degradation of SOAT2/ACAT2 via recruitment of the ubiquitin ligases AMFR/gp78. This Bos taurus (Bovine) protein is Insulin-induced gene 1 protein.